A 315-amino-acid polypeptide reads, in one-letter code: Olfactory receptor 52R1 (315 aa).

Residues 1 to 28 are Extracellular-facing; sequence MVLASGNSSSHPVSFILLGIPGLESFQL. N-linked (GlcNAc...) asparagine glycosylation is present at N7. A helical membrane pass occupies residues 29-49; the sequence is WIAFPFCATYAVAVVGNITLL. The Cytoplasmic segment spans residues 50–57; that stretch reads HVIRIDHT. Residues 58–78 form a helical membrane-spanning segment; the sequence is LHEPMYLFLAMLAITDLVLSS. Topologically, residues 79–102 are extracellular; that stretch reads STQPKMLAIFWFHAHEIQYHACLI. C100 and C192 are disulfide-bonded. The helical transmembrane segment at 103–123 threads the bilayer; the sequence is QVFFIHAFSSVESGVLMAMAL. Topologically, residues 124 to 142 are cytoplasmic; it reads DCYVAICFPLRHSSILTPS. The chain crosses the membrane as a helical span at residues 143–163; the sequence is VVIKLGTIVMLRGLLWVSPFC. Residues 164-199 are Extracellular-facing; it reads FMVSRMPFCQHQAIPQSYCEHMAVLKLVCADTSISR. The chain crosses the membrane as a helical span at residues 200 to 220; the sequence is GNGLFVAFSVAGFDMIVIGMS. The Cytoplasmic segment spans residues 221–240; sequence YVMILRAVLQLPSGEARLKA. A helical membrane pass occupies residues 241–261; the sequence is FSTRSSHICVILALYIPALFS. The Extracellular segment spans residues 262-276; that stretch reads FLTYRFGHDVPRVVH. Residues 277 to 297 traverse the membrane as a helical segment; sequence ILFANLYLLIPPMLNPIIYGV. Residues 298–315 lie on the Cytoplasmic side of the membrane; sequence RTKQIGDRVIQGCCGNIP.

This sequence belongs to the G-protein coupled receptor 1 family.

Its subcellular location is the cell membrane. Its function is as follows. Odorant receptor. The sequence is that of Olfactory receptor 52R1 (OR52R1) from Homo sapiens (Human).